A 160-amino-acid polypeptide reads, in one-letter code: MHILKKPDFSDPKLRAKLAKGMGHNYYGEPAWPNDLLYIFPVVILGTFACLVGLAVLDPAMLGDKADPFATPLEILPEWYLYPVFQILRVVPNKLLGIVLQTLVPLGLMLIPFIENVNKYQNPFRRPIAMAFFLFGTMITIYLGIGACLPIDKSLTLGLF.

3 helical membrane-spanning segments follow: residues 36–56 (LLYI…GLAV), 95–115 (LLGI…PFIE), and 128–148 (IAMA…IGAC).

This sequence belongs to the cytochrome b family. PetD subfamily. As to quaternary structure, the 4 large subunits of the cytochrome b6-f complex are cytochrome b6, subunit IV (17 kDa polypeptide, PetD), cytochrome f and the Rieske protein, while the 4 small subunits are PetG, PetL, PetM and PetN. The complex functions as a dimer.

The protein resides in the cellular thylakoid membrane. In terms of biological role, component of the cytochrome b6-f complex, which mediates electron transfer between photosystem II (PSII) and photosystem I (PSI), cyclic electron flow around PSI, and state transitions. The sequence is that of Cytochrome b6-f complex subunit 4 from Prochlorococcus marinus (strain MIT 9303).